Here is a 596-residue protein sequence, read N- to C-terminus: DNA mismatch repair protein MutL (596 aa).

The protein belongs to the DNA mismatch repair MutL/HexB family.

Its function is as follows. This protein is involved in the repair of mismatches in DNA. It is required for dam-dependent methyl-directed DNA mismatch repair. May act as a 'molecular matchmaker', a protein that promotes the formation of a stable complex between two or more DNA-binding proteins in an ATP-dependent manner without itself being part of a final effector complex. In Leptospira borgpetersenii serovar Hardjo-bovis (strain JB197), this protein is DNA mismatch repair protein MutL.